Consider the following 1039-residue polypeptide: L-arabinokinase (1039 aa).

A helical membrane pass occupies residues 662-678 (AAYVAGTILVLMIELGV). Residue 693–703 (PEGKGVSSSAA) coordinates ATP. Asp-745 serves as the catalytic Proton acceptor.

This sequence belongs to the GHMP kinase family.

The protein resides in the membrane. The enzyme catalyses L-arabinose + ATP = beta-L-arabinose 1-phosphate + ADP + H(+). In terms of biological role, arabinose kinase. Involved in the salvage pathway which converts free L-arabinose to UDP-L-arabinose. May play a role in arabinose transport. The polypeptide is L-arabinokinase (ARA1) (Arabidopsis thaliana (Mouse-ear cress)).